The following is a 476-amino-acid chain: Bifunctional protein HldE (476 aa).

The segment at 1-319 (MKISLPAFEK…EALSLSHGES (319 aa)) is ribokinase. An ATP-binding site is contributed by 195-198 (NMSE). The active site involves aspartate 264. A cytidylyltransferase region spans residues 345 to 476 (MTNGCFDILH…AIIQNIMANQ (132 aa)).

In the N-terminal section; belongs to the carbohydrate kinase PfkB family. This sequence in the C-terminal section; belongs to the cytidylyltransferase family. In terms of assembly, homodimer.

It catalyses the reaction D-glycero-beta-D-manno-heptose 7-phosphate + ATP = D-glycero-beta-D-manno-heptose 1,7-bisphosphate + ADP + H(+). It carries out the reaction D-glycero-beta-D-manno-heptose 1-phosphate + ATP + H(+) = ADP-D-glycero-beta-D-manno-heptose + diphosphate. It participates in nucleotide-sugar biosynthesis; ADP-L-glycero-beta-D-manno-heptose biosynthesis; ADP-L-glycero-beta-D-manno-heptose from D-glycero-beta-D-manno-heptose 7-phosphate: step 1/4. Its pathway is nucleotide-sugar biosynthesis; ADP-L-glycero-beta-D-manno-heptose biosynthesis; ADP-L-glycero-beta-D-manno-heptose from D-glycero-beta-D-manno-heptose 7-phosphate: step 3/4. Functionally, catalyzes the phosphorylation of D-glycero-D-manno-heptose 7-phosphate at the C-1 position to selectively form D-glycero-beta-D-manno-heptose-1,7-bisphosphate. Catalyzes the ADP transfer from ATP to D-glycero-beta-D-manno-heptose 1-phosphate, yielding ADP-D-glycero-beta-D-manno-heptose. This chain is Bifunctional protein HldE, found in Shewanella pealeana (strain ATCC 700345 / ANG-SQ1).